Reading from the N-terminus, the 637-residue chain is MLPFTREMHRFSPIVEFLLSKRQIFLHYSQFKSRFDLIHRSFHVSRALEDNFRRSNGIGLVCLEKSHNDRTKNSKYDEFASDVEKSYRILRKFHSRVPKLELALNESGVELRPGLIERVLNRCGDAGNLGYRFFVWAAKQPRYCHSIEVYKSMVKILSKMRQFGAVWGLIEEMRKENPQLIEPELFVVLVQRFASADMVKKAIEVLDEMPKFGFEPDEYVFGCLLDALCKHGSVKDAAKLFEDMRMRFPVNLRYFTSLLYGWCRVGKMMEAKYVLVQMNEAGFEPDIVDYTNLLSGYANAGKMADAYDLLRDMRRRGFEPNANCYTVLIQALCKVDRMEEAMKVFVEMERYECEADVVTYTALVSGFCKWGKIDKCYIVLDDMIKKGLMPSELTYMHIMVAHEKKESFEECLELMEKMRQIEYHPDIGIYNVVIRLACKLGEVKEAVRLWNEMEENGLSPGVDTFVIMINGLASQGCLLEASDHFKEMVTRGLFSVSQYGTLKLLLNTVLKDKKLEMAKDVWSCITSKGACELNVLSWTIWIHALFSKGYEKEACSYCIEMIEMDFMPQPDTFAKLMKGLKKLYNREFAGEITEKVRNMAAEREMSFKMYKRRGVQDLTEKAKSKQDREGKKKQRSR.

PPR repeat units lie at residues 146-180 (SIEV…NPQL), 182-216 (EPEL…GFEP), 217-247 (DEYV…MRMR), 251-285 (NLRY…GFEP), 286-320 (DIVD…GFEP), 321-355 (NANC…ECEA), 356-390 (DVVT…GLMP), 391-425 (SELT…EYHP), 426-460 (DIGI…GLSP), 461-495 (GVDT…GLFS), 498-532 (QYGT…GACE), and 534-568 (NVLS…DFMP). Residues 616–630 (QDLTEKAKSKQDREG) show a composition bias toward basic and acidic residues. The tract at residues 616 to 637 (QDLTEKAKSKQDREGKKKQRSR) is disordered.

This sequence belongs to the PPR family. P subfamily.

This chain is Putative pentatricopeptide repeat-containing protein At5g65820, found in Arabidopsis thaliana (Mouse-ear cress).